A 185-amino-acid polypeptide reads, in one-letter code: Peptide deformylase (185 aa).

The Fe cation site is built by C109 and H152. The active site involves E153. Residue H156 coordinates Fe cation.

This sequence belongs to the polypeptide deformylase family. Fe(2+) is required as a cofactor.

The catalysed reaction is N-terminal N-formyl-L-methionyl-[peptide] + H2O = N-terminal L-methionyl-[peptide] + formate. Functionally, removes the formyl group from the N-terminal Met of newly synthesized proteins. Requires at least a dipeptide for an efficient rate of reaction. N-terminal L-methionine is a prerequisite for activity but the enzyme has broad specificity at other positions. The polypeptide is Peptide deformylase (Roseiflexus castenholzii (strain DSM 13941 / HLO8)).